The primary structure comprises 316 residues: MKISNNSLGFLPTTFILVGIPGLESEHLWISVPFSLIYIIIFLGNGIILHVIRTDIALHQPMYLFLAMLALAEVRVSASTLPTVLGIFLFGNTEISLEACLFPDVLHPFFIHDGASCAAGHVFGPLYSHLQPTELHSYPDTAQGLWHRSYYRTEKHYAHGSVAHSLMASALLWPQCPLTFLLSAPQSYLSCGNISVNNIYGIFIVTSTFGLDSLLIVISYGLILHTVLGIATGEGRKKALNTCGSHVCAVLAYYVPMIGLSIVHRLGHRVSPLLQAMMANAYLFFPPVVNPIVYSIKTKEIHGAIVRMLLEKRRRV.

The Extracellular portion of the chain corresponds to methionine 1–serine 31. An N-linked (GlcNAc...) asparagine glycan is attached at asparagine 5. Residues valine 32–isoleucine 52 traverse the membrane as a helical segment. Topologically, residues arginine 53–tyrosine 63 are cytoplasmic. Residues leucine 64–valine 84 traverse the membrane as a helical segment. The Extracellular segment spans residues leucine 85 to aspartate 104. Cysteine 100 and cysteine 191 are oxidised to a cystine. Residues valine 105 to proline 125 form a helical membrane-spanning segment. The Cytoplasmic portion of the chain corresponds to leucine 126–serine 161. A helical transmembrane segment spans residues valine 162 to leucine 182. The Extracellular portion of the chain corresponds to serine 183 to cysteine 191. A helical transmembrane segment spans residues glycine 192–aspartate 212. At serine 213–threonine 242 the chain is on the cytoplasmic side. The helical transmembrane segment at cysteine 243–valine 263 threads the bilayer. The Extracellular portion of the chain corresponds to histidine 264 to glutamine 275. Residues alanine 276–isoleucine 296 traverse the membrane as a helical segment. The Cytoplasmic segment spans residues lysine 297 to valine 316.

This sequence belongs to the G-protein coupled receptor 1 family.

The protein resides in the cell membrane. Functionally, odorant receptor. The chain is Olfactory receptor 51J1 (OR51J1) from Homo sapiens (Human).